We begin with the raw amino-acid sequence, 205 residues long: Protein phosphatase inhibitor 2 family member C (205 aa).

2 disordered regions span residues 1-51 and 70-114; these read MSAS…DESS and EPGT…DHSC. Residues 12 to 17 form a required for binding PPP1CC region; that stretch reads KGILKN. Positions 19–34 are enriched in low complexity; that stretch reads SSSGSSVATSGQQSGG. Residues 43-55 form a required for binding PPP1CC region; the sequence is KSQKWDESSILAT. Basic and acidic residues predominate over residues 84–102; that stretch reads DSVRDVEGEDSVRGVEGKE. The required for binding PPP1CC catalytic center, displacing metal ions and inhibition of PPP1CC catalytic activity stretch occupies residues 147–150; sequence HYNE. Positions 165-205 are disordered; that stretch reads LQSEDDENEERPQATNEEKTAAEESEEAPLSGGLQTQSCDP. The span at 174–186 shows a compositional bias: basic and acidic residues; sequence ERPQATNEEKTAA.

The protein belongs to the protein phosphatase inhibitor 2 family.

Functionally, functions as a protein phosphatase inhibitor. It inhibits activity of the catalytic subunit of PP1 and weakly inhibits the activity of myosin-associated phosphates. This chain is Protein phosphatase inhibitor 2 family member C (PPP1R2C), found in Macaca fascicularis (Crab-eating macaque).